Consider the following 431-residue polypeptide: Leucine carboxyl methyltransferase 1 (431 aa).

S-adenosyl-L-methionine is bound by residues Arg-103, Gly-131, Asp-159, and Asp-219–Leu-220. Residues Gln-228–Gln-268 form a disordered region. Position 289 (Glu-289) interacts with S-adenosyl-L-methionine.

This sequence belongs to the methyltransferase superfamily. LCMT family.

The enzyme catalyses [phosphatase 2A protein]-C-terminal L-leucine + S-adenosyl-L-methionine = [phosphatase 2A protein]-C-terminal L-leucine methyl ester + S-adenosyl-L-homocysteine. In terms of biological role, methylates the carboxyl group of the C-terminal leucine residue of protein phosphatase 2A catalytic subunits to form alpha-leucine ester residues. In Neurospora crassa (strain ATCC 24698 / 74-OR23-1A / CBS 708.71 / DSM 1257 / FGSC 987), this protein is Leucine carboxyl methyltransferase 1 (ppm-1).